Reading from the N-terminus, the 206-residue chain is Uracil phosphoribosyltransferase (206 aa).

5-phospho-alpha-D-ribose 1-diphosphate-binding positions include R76, R101, and 128 to 136 (DPMLATGGS). Residues I191 and 196–198 (GDA) each bind uracil. D197 is a binding site for 5-phospho-alpha-D-ribose 1-diphosphate.

This sequence belongs to the UPRTase family. Mg(2+) is required as a cofactor.

The catalysed reaction is UMP + diphosphate = 5-phospho-alpha-D-ribose 1-diphosphate + uracil. It functions in the pathway pyrimidine metabolism; UMP biosynthesis via salvage pathway; UMP from uracil: step 1/1. Allosterically activated by GTP. Catalyzes the conversion of uracil and 5-phospho-alpha-D-ribose 1-diphosphate (PRPP) to UMP and diphosphate. The polypeptide is Uracil phosphoribosyltransferase (Malacoplasma penetrans (strain HF-2) (Mycoplasma penetrans)).